Here is a 116-residue protein sequence, read N- to C-terminus: Large ribosomal subunit protein bL19c (116 aa).

This sequence belongs to the bacterial ribosomal protein bL19 family.

It localises to the plastid. It is found in the chloroplast. This Cyanidium caldarium (Red alga) protein is Large ribosomal subunit protein bL19c.